The chain runs to 176 residues: MFHATTIVAVKKGDQVAMAGDGQVTMGQATVMKHKARKVRRLFHGKVLAGFAGSVADAFTLFEKFENKLEEYQGNLQRAAVELAKDWRMDKALRNLEALLIVADKQSMLLISGSGEVIEPDDGIAAIGSGGNYALAAARALVKNTDLQPAQLVQEAMEVASSICVYTNDQIIVEEL.

Residue Thr5 is part of the active site. Residues Ser161, Cys164, and Thr167 each coordinate Na(+).

It belongs to the peptidase T1B family. HslV subfamily. A double ring-shaped homohexamer of HslV is capped on each side by a ring-shaped HslU homohexamer. The assembly of the HslU/HslV complex is dependent on binding of ATP.

It is found in the cytoplasm. It carries out the reaction ATP-dependent cleavage of peptide bonds with broad specificity.. Allosterically activated by HslU binding. Its function is as follows. Protease subunit of a proteasome-like degradation complex believed to be a general protein degrading machinery. This is ATP-dependent protease subunit HslV from Desulfitobacterium hafniense (strain DSM 10664 / DCB-2).